The primary structure comprises 384 residues: Protein V (384 aa).

Disordered regions lie at residues 1–23 (MDQD…GGRE) and 38–318 (SEPT…KKGH). Over residues 7-20 (ILKEDSEVEREAPG) the composition is skewed to basic and acidic residues. The segment covering 50–59 (LHNTINTPQG) has biased composition (polar residues). Serine 68 carries the post-translational modification Phosphoserine; by host. Residues 83–101 (RSGEESRVSGRTSKPEAEA) show a composition bias toward basic and acidic residues. Position 125 is a phosphoserine; by host (serine 125). The span at 150–168 (GIEDENREMAAHPDKRGED) shows a compositional bias: basic and acidic residues. A compositionally biased stretch (polar residues) spans 191–206 (ASNNGRSMEPGSSHSA). Residues serine 192, serine 249, serine 257, and serine 260 each carry the phosphoserine; by host modification. Zn(2+)-binding residues include histidine 318, cysteine 337, cysteine 341, cysteine 353, cysteine 355, cysteine 358, cysteine 362, and cysteine 365.

Belongs to the paramyxoviruses V protein family. As to quaternary structure, interacts with host IFIH1/MDA5 and DHX58/LGP2. Interacts with host IRF3. Interacts with host RIGI regulatory protein (via CARDs domain) and host TRIM25 (via SPRY domain); these interactions prevent TRIM25-mediated ubiquitination of RIG-I and disrupts downstream RIG-I signaling.

It localises to the host cytoplasm. Functionally, plays an essential role in the inhibition of host immune response. Prevents the establishment of cellular antiviral state by blocking interferon-alpha/beta (IFN-alpha/beta) production and signaling pathway. Interacts with host IFIH1/MDA5 and DHX58/LGP2 to inhibit the transduction pathway involved in the activation of IFN-beta promoter, thus protecting the virus against cell antiviral state. Also interacts with and inhibits host IRF3. Blocks the type I interferon signaling pathway by disrupting the RIG-I signaling pathway. The sequence is that of Protein V (P/V/C) from Sendai virus (strain Harris) (SeV).